A 226-amino-acid polypeptide reads, in one-letter code: UPF0758 protein PSEEN5431 (226 aa).

Residues 102–224 (VMDNPLAVRR…PLSMIEHGWL (123 aa)) form the MPN domain. Residues histidine 173, histidine 175, and aspartate 186 each coordinate Zn(2+). The JAMM motif signature appears at 173 to 186 (HNHPSGNCEPSQDD).

It belongs to the UPF0758 family.

The polypeptide is UPF0758 protein PSEEN5431 (Pseudomonas entomophila (strain L48)).